Reading from the N-terminus, the 414-residue chain is Probable sugar-binding periplasmic protein (414 aa).

Positions 1-22 (MRKFMTTTAVAALMLAATAARA) are cleaved as a signal peptide.

It belongs to the bacterial solute-binding protein 1 family.

The protein resides in the periplasm. In terms of biological role, part of a binding-protein-dependent transport system for a sugar. The chain is Probable sugar-binding periplasmic protein from Rhizobium meliloti (strain 1021) (Ensifer meliloti).